A 493-amino-acid polypeptide reads, in one-letter code: Phenmedipham hydrolase (493 aa).

Ser-188 serves as the catalytic Acyl-ester intermediate. Catalysis depends on charge relay system residues Glu-307 and His-402.

It belongs to the type-B carboxylesterase/lipase family. In terms of assembly, monomer.

Functionally, may degrade the phenylcarbamate herbicides phenmedipham and desmedipham cometabolically by hydrolyzing their central carbamate linkages. Conveys resistance to the herbicide phenmedipham. The chain is Phenmedipham hydrolase (pcd) from Pseudarthrobacter oxydans (Arthrobacter oxydans).